The sequence spans 261 residues: Kallikrein 1-related peptidase b21 (261 aa).

The signal sequence occupies residues 1–17; it reads MRFLILFLALSLGEIDA. The propeptide at 18–24 is activation peptide; that stretch reads APPVQSR. Residues 25–258 enclose the Peptidase S1 domain; it reads IVGGFNCEKN…FTSWIKDTMA (234 aa). 5 disulfide bridges follow: Cys-31–Cys-173, Cys-50–Cys-66, Cys-152–Cys-219, Cys-184–Cys-198, and Cys-209–Cys-234. The active-site Charge relay system is the His-65. Residue Asn-102 is glycosylated (N-linked (GlcNAc...) asparagine). The active-site Charge relay system is the Asp-120. Residue Ser-213 is the Charge relay system of the active site.

Belongs to the peptidase S1 family. Kallikrein subfamily. In terms of tissue distribution, expressed in testis and submaxillary gland. In the testis, expression localized specifically to Leydig cells in the interstitial tissues.

It carries out the reaction Preferential cleavage of Arg-|-Xaa bonds in small molecule substrates. Highly selective action to release kallidin (lysyl-bradykinin) from kininogen involves hydrolysis of Met-|-Xaa or Leu-|-Xaa.. With respect to regulation, inhibited by protease inhibitors diisopropylfluorophosphate, leupeptin, antipain, benzamidine, phenylmethylsulfonyl fluoride and soybean trypsin inhibitor. In terms of biological role, glandular kallikreins cleave Met-Lys and Arg-Ser bonds in kininogen to release Lys-bradykinin. Displays trypsin-like substrate specificity and shows activity towards casein, gelatin, fibronectin and IGFBP3. This is Kallikrein 1-related peptidase b21 (Klk1b21) from Mus musculus (Mouse).